A 305-amino-acid polypeptide reads, in one-letter code: NADH-cytochrome b5 reductase 1 (305 aa).

A helical transmembrane segment spans residues 8 to 28; the sequence is VLLASLGVGLLTLLGVALGAY. The 113-residue stretch at 44–156 folds into the FAD-binding FR-type domain; that stretch reads NEKYQLRLLD…RGPSGLLTYA (113 aa). FAD-binding positions include 136 to 166 and 175 to 210; these read DSLKIGDVVEFRGPSGLLTYAGKGKFNIQPN and VARNLGMIAGGTGITPMLQLIRAILKDPEDPTQCFL.

It belongs to the flavoprotein pyridine nucleotide cytochrome reductase family. It depends on FAD as a cofactor.

It localises to the membrane. The catalysed reaction is 2 Fe(III)-[cytochrome b5] + NADH = 2 Fe(II)-[cytochrome b5] + NAD(+) + H(+). In terms of biological role, NADH-cytochrome b5 reductases are involved in desaturation and elongation of fatty acids, cholesterol biosynthesis, drug metabolism, and, in erythrocyte, methemoglobin reduction. This chain is NADH-cytochrome b5 reductase 1 (CYB5R1), found in Bos taurus (Bovine).